Consider the following 220-residue polypeptide: Translin-1 (220 aa).

This sequence belongs to the translin family. In terms of assembly, forms an octameric ring-shaped structure, which is capable of binding DNA or RNA.

It is found in the cytoplasm. The protein localises to the nucleus. Functionally, DNA-binding protein that specifically recognizes consensus sequences at the breakpoint junctions in chromosomal translocations. Selectively binds single-stranded d(GT)n and d(GTT)n microsatellite repeats. Has much higher affinities for the homologous RNA sequences (GU)n and (GUU)n. Does not bind double-stranded DNA. Has a role in meiosis. The protein is Translin-1 (tsn1) of Schizosaccharomyces pombe (strain 972 / ATCC 24843) (Fission yeast).